A 239-amino-acid chain; its full sequence is 1-(5-phosphoribosyl)-5-[(5-phosphoribosylamino)methylideneamino] imidazole-4-carboxamide isomerase (239 aa).

Residue Asp-8 is the Proton acceptor of the active site. The Proton donor role is filled by Asp-129.

Belongs to the HisA/HisF family.

The protein localises to the cytoplasm. It catalyses the reaction 1-(5-phospho-beta-D-ribosyl)-5-[(5-phospho-beta-D-ribosylamino)methylideneamino]imidazole-4-carboxamide = 5-[(5-phospho-1-deoxy-D-ribulos-1-ylimino)methylamino]-1-(5-phospho-beta-D-ribosyl)imidazole-4-carboxamide. It participates in amino-acid biosynthesis; L-histidine biosynthesis; L-histidine from 5-phospho-alpha-D-ribose 1-diphosphate: step 4/9. The protein is 1-(5-phosphoribosyl)-5-[(5-phosphoribosylamino)methylideneamino] imidazole-4-carboxamide isomerase of Bacillus cereus (strain AH187).